A 108-amino-acid chain; its full sequence is PTS system fructose-like EIIB component 1 (108 aa).

The 101-residue stretch at 1 to 101 folds into the PTS EIIB type-2 domain; that stretch reads MSKKLIALCA…AAGIIKEIEE (101 aa). The Phosphocysteine intermediate role is filled by Cys11. Phosphocysteine; by EIIA is present on Cys11.

It is found in the cytoplasm. It catalyses the reaction D-fructose(out) + N(pros)-phospho-L-histidyl-[protein] = D-fructose 1-phosphate(in) + L-histidyl-[protein]. In terms of biological role, the phosphoenolpyruvate-dependent sugar phosphotransferase system (sugar PTS), a major carbohydrate active transport system, catalyzes the phosphorylation of incoming sugar substrates concomitantly with their translocation across the cell membrane. The enzyme II FryABC PTS system is involved in fructose transport. The chain is PTS system fructose-like EIIB component 1 (fryB) from Shigella flexneri.